A 382-amino-acid chain; its full sequence is Histidinol-phosphate aminotransferase (382 aa).

At K215 the chain carries N6-(pyridoxal phosphate)lysine. The interval 363–382 (NIDNQSKTHSQTSSIRKGTI) is disordered.

The protein belongs to the class-II pyridoxal-phosphate-dependent aminotransferase family. Histidinol-phosphate aminotransferase subfamily. In terms of assembly, homodimer. It depends on pyridoxal 5'-phosphate as a cofactor.

The catalysed reaction is L-histidinol phosphate + 2-oxoglutarate = 3-(imidazol-4-yl)-2-oxopropyl phosphate + L-glutamate. It functions in the pathway amino-acid biosynthesis; L-histidine biosynthesis; L-histidine from 5-phospho-alpha-D-ribose 1-diphosphate: step 7/9. The sequence is that of Histidinol-phosphate aminotransferase from Yersinia pseudotuberculosis serotype O:3 (strain YPIII).